Consider the following 672-residue polypeptide: Beta-galactosidase GanA (672 aa).

Arg-105 contributes to the substrate binding site. Cys-109 provides a ligand contact to Zn(2+). Residue Asn-143 coordinates substrate. Residue Glu-144 is the Proton donor of the active site. The Zn(2+) site is built by Cys-149, Cys-151, and Cys-154. The Nucleophile role is filled by Glu-308. Residues Trp-316 and 356–359 each bind substrate; that span reads EKLH.

Belongs to the glycosyl hydrolase 42 family. In terms of assembly, homotrimer.

The enzyme catalyses Hydrolysis of terminal non-reducing beta-D-galactose residues in beta-D-galactosides.. Its activity is regulated as follows. Inhibited by zinc, cobalt and copper ions. Its function is as follows. Involved in galactan degradation. Hydrolyzes galactooligosaccharides released by the endo-beta-1,4-galactanase GanB from galactan. Degrades galactotetraose, galactotriose and galactobiose, generating galactose as the end product. It is unable to use lactose. In vitro, shows maximal activity with o-nitrophenyl-beta-D-galactopyranoside (ONPG) and p-nitrophenyl-beta-D-galactopyranoside (PNPG) as substrates, trace activity with p-nitrophenyl-alpha-L-arabinopyranoside and o-nitrophenyl-beta-D-fucopyranoside as substrates, but no activity with p-nitrophenyl-alpha-D-galactopyranoside, p-nitrophenyl-beta-D-glucopyranoside, o-nitrophenyl-beta-D-xylopyranoside, p-nitrophenyl-beta-D-mannopyranoside or p-nitrophenyl-alpha-L-arabinofuranoside as substrates. This is Beta-galactosidase GanA from Bacillus subtilis (strain 168).